The following is a 215-amino-acid chain: Extracellular small neutral protease (215 aa).

An N-terminal signal peptide occupies residues 1–30 (MRMTRAASALAGLGLAVAAALGSVAPASAA). Residue Thr-152 coordinates Ca(2+). His-157 lines the Zn(2+) pocket. Glu-158 is a catalytic residue. Zn(2+) is bound by residues His-161 and Asp-167. Cysteines 173 and 186 form a disulfide.

The protein belongs to the peptidase M7 family. Zn(2+) is required as a cofactor.

The protein localises to the secreted. The catalysed reaction is Hydrolyzes proteins with a preference for Tyr or Phe in the P1' position. Has no action on amino-acid p-nitroanilides.. This Streptomyces coelicolor protein is Extracellular small neutral protease (snpA).